The sequence spans 332 residues: tRNA U34 carboxymethyltransferase (332 aa).

Residues Lys-91, Trp-105, Lys-110, Gly-130, 152-154, 181-182, Met-196, Tyr-200, and Arg-315 contribute to the carboxy-S-adenosyl-L-methionine site; these read DPS and IE.

It belongs to the class I-like SAM-binding methyltransferase superfamily. CmoB family. Homotetramer.

The catalysed reaction is carboxy-S-adenosyl-L-methionine + 5-hydroxyuridine(34) in tRNA = 5-carboxymethoxyuridine(34) in tRNA + S-adenosyl-L-homocysteine + H(+). Its function is as follows. Catalyzes carboxymethyl transfer from carboxy-S-adenosyl-L-methionine (Cx-SAM) to 5-hydroxyuridine (ho5U) to form 5-carboxymethoxyuridine (cmo5U) at position 34 in tRNAs. This chain is tRNA U34 carboxymethyltransferase, found in Shewanella sp. (strain W3-18-1).